The primary structure comprises 352 residues: Homoserine O-acetyltransferase (352 aa).

An AB hydrolase-1 domain is found at 37–330 (NAVLVCHALT…APHGHDTFLI (294 aa)). S133 (nucleophile) is an active-site residue. R206 contributes to the substrate binding site. Active-site residues include D296 and H325. Substrate is bound at residue D326.

This sequence belongs to the AB hydrolase superfamily. MetX family. Homodimer.

The protein localises to the cytoplasm. The enzyme catalyses L-homoserine + acetyl-CoA = O-acetyl-L-homoserine + CoA. Its pathway is amino-acid biosynthesis; L-methionine biosynthesis via de novo pathway; O-acetyl-L-homoserine from L-homoserine: step 1/1. Transfers an acetyl group from acetyl-CoA to L-homoserine, forming acetyl-L-homoserine. The sequence is that of Homoserine O-acetyltransferase from Salinibacter ruber (strain DSM 13855 / M31).